We begin with the raw amino-acid sequence, 147 residues long: Hemoglobin subunit beta-1 (147 aa).

Serine 2 bears the N-acetylserine mark. One can recognise a Globin domain in the interval 3–147; that stretch reads FLSAEEKGLV…VASALAHRYH (145 aa). Lysine 18 carries the post-translational modification N6-succinyllysine. Serine 45 and serine 51 each carry phosphoserine. Lysine 60 carries the post-translational modification N6-succinyllysine. Heme b contacts are provided by histidine 64 and histidine 93. Position 105 is an asymmetric dimethylarginine (arginine 105).

The protein belongs to the globin family. As to quaternary structure, heterotetramer of two alpha chains and two beta chains. In terms of tissue distribution, red blood cells.

Functionally, involved in oxygen transport from the lung to the various peripheral tissues. This chain is Hemoglobin subunit beta-1 (HBB1), found in Panthera onca (Jaguar).